The following is an 863-amino-acid chain: MRYMTSEEIREAFLKFFEKKGHKILPSASLIPDDPQLLFTVAGMVPFKPIFWGKVEPVYTRVATCQKCLRTVDIENVGKTPRHHTFFEMLGNFSFGDYFKEEAIEWAWEFLTQVLGVPEEKLWVSVYEEDEEAFRIWNEKIGLPEKRILRMGKEDNFWGPAGPTGPCGPDTEIFYDTGYSKGCPEGEGCTPANSEGRFVEIWNLVFTEYYQDEEGKLHPLPRKNIDTGAGLERFCAMMQGVYSNFDTDLFQPIIKRIEELTGVGYKTDEEKDVSIRVIADHIRAITFLISEGVFPSNEGRGYVLRRIIRRAMRHGILLGMSEPFLYRIVDAVVEKMGKVYPEIVRGEGMVKEVLSAEENRFLKTLEQGMKVFDEIVEKKGKIDSEDAFRLYDTYGLPLELTLEIAKEKGVEVDVQEFNKYMEEQQRKSRAAMGDVEFARRYEYLEKLPKDFRTEFTGYEKLEDEGEVVLVARDDETVEEASEGTVEVVFSRTPFYAEKGGQVSDTGMVEWRDGKALVEYVFEASEGVIVHRIKILDGTLRRGQKVILRVDKKRREATMRNHTATHLLHAALKKVLGDHVRQAGSLVAPDRLRFDFTHFKGLSSAEIEQVEDLVNEWIMEAIPVEVRYTSYEEAVKSGVVALFTEKYGDVVRVVEVPGVSKELCGGTHVKNTGQIGLFKIISEESVSSGVRRIEAVTGFSALELLRNQKKLIDQLKEILGAREDELTDRVLSLREKVKELEKKLSQGRISEERIAMKQLEDGVKVFHGVFEGVEAKHLGGIADNVLKKEGEGIVILFSKFENKVSLVVKVSENLLGKYDASSIARNIAKELGGNGGGRKNFAQAGGRHPERIKDVLERLEEFLR.

His-561, His-565, Cys-663, and His-667 together coordinate Zn(2+).

The protein belongs to the class-II aminoacyl-tRNA synthetase family. Zn(2+) is required as a cofactor.

It is found in the cytoplasm. It catalyses the reaction tRNA(Ala) + L-alanine + ATP = L-alanyl-tRNA(Ala) + AMP + diphosphate. Catalyzes the attachment of alanine to tRNA(Ala) in a two-step reaction: alanine is first activated by ATP to form Ala-AMP and then transferred to the acceptor end of tRNA(Ala). Also edits incorrectly charged Ser-tRNA(Ala) and Gly-tRNA(Ala) via its editing domain. This is Alanine--tRNA ligase from Thermotoga maritima (strain ATCC 43589 / DSM 3109 / JCM 10099 / NBRC 100826 / MSB8).